The primary structure comprises 885 residues: DNA mismatch repair protein MutS (885 aa).

ATP is bound at residue 640-647 (GPNMGGKS).

Belongs to the DNA mismatch repair MutS family.

This protein is involved in the repair of mismatches in DNA. It is possible that it carries out the mismatch recognition step. This protein has a weak ATPase activity. This chain is DNA mismatch repair protein MutS, found in Variovorax paradoxus (strain S110).